Here is a 590-residue protein sequence, read N- to C-terminus: Beta-fructofuranosidase, insoluble isoenzyme CWINV2 (590 aa).

The first 25 residues, 1 to 25, serve as a signal peptide directing secretion; that stretch reads MSAPKFGYVLLLIVLINISNNGVDA. Residues 59–62, Q78, and W86 each bind substrate; that span reads WIND. The active site involves D62. N-linked (GlcNAc...) asparagine glycosylation is present at N118. 121–122 provides a ligand contact to substrate; the sequence is WS. N-linked (GlcNAc...) asparagine glycosylation is found at N143 and N180. Substrate is bound by residues 185 to 186, E241, and D275; that span reads RD. N335 carries N-linked (GlcNAc...) asparagine glycosylation. A disulfide bond links C435 and C483. Residue N564 is glycosylated (N-linked (GlcNAc...) asparagine).

Belongs to the glycosyl hydrolase 32 family. In terms of tissue distribution, expressed in flowers, and seeds.

It localises to the secreted. The protein resides in the extracellular space. It is found in the apoplast. Its subcellular location is the cell wall. It carries out the reaction Hydrolysis of terminal non-reducing beta-D-fructofuranoside residues in beta-D-fructofuranosides.. This chain is Beta-fructofuranosidase, insoluble isoenzyme CWINV2 (CWINV2), found in Arabidopsis thaliana (Mouse-ear cress).